Reading from the N-terminus, the 181-residue chain is MKCLLLALGLSLMCGNQATDIPQTMQDLDLQEVAGRWHSVAMVASDISLLDSESVPLRVYVEELRPTPEGNLEIILREGANHACVERNIVAQKTEDPAVFTVNYQGERKISVLDTDYAHYMFFCVGPPLPSAEHGMVCQYLARTQKVDEEVMEKFSRALQPLPGRVQIVQDPSGGQERCGF.

Residues 1-18 (MKCLLLALGLSLMCGNQA) form the signal peptide. Disulfide bonds link Cys84–Cys179 and Cys124–Cys138.

This sequence belongs to the calycin superfamily. Lipocalin family. As to quaternary structure, monomer.

Its subcellular location is the secreted. Functionally, lactoglobulin is the primary component of whey, it binds retinol and is probably involved in the transport of that molecule. This Equus caballus (Horse) protein is Beta-lactoglobulin-2 (LGB2).